Reading from the N-terminus, the 218-residue chain is Small ribosomal subunit protein uS5 (218 aa).

The S5 DRBM domain maps to L66–V129.

This sequence belongs to the universal ribosomal protein uS5 family. Part of the 30S ribosomal subunit. Contacts protein S4.

Functionally, with S4 and S12 plays an important role in translational accuracy. The chain is Small ribosomal subunit protein uS5 from Pyrobaculum aerophilum (strain ATCC 51768 / DSM 7523 / JCM 9630 / CIP 104966 / NBRC 100827 / IM2).